Consider the following 358-residue polypeptide: UPF0575 protein C19orf67 (358 aa).

The segment at 1–84 (MATEQWFEGS…PGPAPPRLSL (84 aa)) is disordered. Composition is skewed to pro residues over residues 17-32 (ETPPPDALEPGTPPCG) and 70-80 (PLVPRPGPAPP).

Belongs to the UPF0575 family.

This is UPF0575 protein C19orf67 (C19orf67) from Homo sapiens (Human).